The sequence spans 185 residues: Ribosome-recycling factor (185 aa).

It belongs to the RRF family.

It is found in the cytoplasm. Its function is as follows. Responsible for the release of ribosomes from messenger RNA at the termination of protein biosynthesis. May increase the efficiency of translation by recycling ribosomes from one round of translation to another. This chain is Ribosome-recycling factor, found in Wolbachia sp. subsp. Drosophila simulans (strain wRi).